The following is a 185-amino-acid chain: Ribosome-recycling factor (185 aa).

This sequence belongs to the RRF family.

Its subcellular location is the cytoplasm. Its function is as follows. Responsible for the release of ribosomes from messenger RNA at the termination of protein biosynthesis. May increase the efficiency of translation by recycling ribosomes from one round of translation to another. This is Ribosome-recycling factor from Exiguobacterium sibiricum (strain DSM 17290 / CCUG 55495 / CIP 109462 / JCM 13490 / 255-15).